The following is a 372-amino-acid chain: Anhydro-N-acetylmuramic acid kinase (372 aa).

Residue Gly13–Asp20 coordinates ATP.

This sequence belongs to the anhydro-N-acetylmuramic acid kinase family.

The enzyme catalyses 1,6-anhydro-N-acetyl-beta-muramate + ATP + H2O = N-acetyl-D-muramate 6-phosphate + ADP + H(+). The protein operates within amino-sugar metabolism; 1,6-anhydro-N-acetylmuramate degradation. Its pathway is cell wall biogenesis; peptidoglycan recycling. In terms of biological role, catalyzes the specific phosphorylation of 1,6-anhydro-N-acetylmuramic acid (anhMurNAc) with the simultaneous cleavage of the 1,6-anhydro ring, generating MurNAc-6-P. Is required for the utilization of anhMurNAc either imported from the medium or derived from its own cell wall murein, and thus plays a role in cell wall recycling. This chain is Anhydro-N-acetylmuramic acid kinase, found in Rhizobium johnstonii (strain DSM 114642 / LMG 32736 / 3841) (Rhizobium leguminosarum bv. viciae).